The following is a 136-amino-acid chain: Protein PsiE (136 aa).

A run of 4 helical transmembrane segments spans residues 15–35, 55–75, 83–103, and 108–128; these read ILQN…VVFL, YELV…ALIV, HFPL…LIIV, and PMDV…LWLC.

The protein belongs to the PsiE family.

Its subcellular location is the cell inner membrane. In Salmonella gallinarum (strain 287/91 / NCTC 13346), this protein is Protein PsiE.